The primary structure comprises 534 residues: CTP synthase (534 aa).

The segment at 1-268 (MAAKYIFVTG…DQIVCDHLQL (268 aa)) is amidoligase domain. Ser14 is a CTP binding site. Position 14 (Ser14) interacts with UTP. 15–20 (SLGKGI) is an ATP binding site. Tyr55 lines the L-glutamine pocket. Residue Asp72 coordinates ATP. Asp72 and Glu142 together coordinate Mg(2+). CTP is bound by residues 149-151 (DIE), 189-194 (KSKPTQ), and Lys225. Residues 189–194 (KSKPTQ) and Lys225 contribute to the UTP site. Residues 293 to 534 (RIAIVGKYVE…FVRNALAAQA (242 aa)) enclose the Glutamine amidotransferase type-1 domain. Gly355 contributes to the L-glutamine binding site. The active-site Nucleophile; for glutamine hydrolysis is the Cys382. L-glutamine is bound by residues 383–386 (LGMQ), Glu406, and Arg463. Catalysis depends on residues His508 and Glu510.

The protein belongs to the CTP synthase family. In terms of assembly, homotetramer.

The enzyme catalyses UTP + L-glutamine + ATP + H2O = CTP + L-glutamate + ADP + phosphate + 2 H(+). It carries out the reaction L-glutamine + H2O = L-glutamate + NH4(+). It catalyses the reaction UTP + NH4(+) + ATP = CTP + ADP + phosphate + 2 H(+). It functions in the pathway pyrimidine metabolism; CTP biosynthesis via de novo pathway; CTP from UDP: step 2/2. With respect to regulation, allosterically activated by GTP, when glutamine is the substrate; GTP has no effect on the reaction when ammonia is the substrate. The allosteric effector GTP functions by stabilizing the protein conformation that binds the tetrahedral intermediate(s) formed during glutamine hydrolysis. Inhibited by the product CTP, via allosteric rather than competitive inhibition. Functionally, catalyzes the ATP-dependent amination of UTP to CTP with either L-glutamine or ammonia as the source of nitrogen. Regulates intracellular CTP levels through interactions with the four ribonucleotide triphosphates. This is CTP synthase from Shouchella clausii (strain KSM-K16) (Alkalihalobacillus clausii).